Here is a 718-residue protein sequence, read N- to C-terminus: LON peptidase N-terminal domain and RING finger protein 3 (718 aa).

Residues 1–69 form a disordered region; the sequence is MESLRTEQML…PGTSTPESKV (69 aa). Positions 57–66 are enriched in polar residues; it reads EQSPGTSTPE. One copy of the TPR 1 repeat lies at 67–100; that stretch reads SKVLLTQADALASRGRIREALEVYRQLSERQQLV. The RING-type 1 zinc-finger motif lies at 158–196; it reads CRKCHGFLSDPVSLSCGHTFCKLCLERGRAADRRCALCG. TPR repeat units follow at residues 243–276 and 278–310; these read ASQL…APND and LLYS…RPMG. The tract at residues 322–413 is disordered; sequence SQEEAAARGD…TDQGDKPALS (92 aa). Residues 339 to 352 are compositionally biased toward basic and acidic residues; that stretch reads AKVKGDGQQHHMKD. An RING-type 2 zinc finger spans residues 426 to 464; the sequence is CALCMRLFYEPVTTPCGHTFCLKCLERCLDHNAKCPLCK. Residues 505 to 714 form the Lon N-terminal domain; it reads MEELSNLNKN…GIRRVLAFIS (210 aa).

This chain is LON peptidase N-terminal domain and RING finger protein 3 (LONRF3), found in Macaca fascicularis (Crab-eating macaque).